The primary structure comprises 115 residues: MAAFGLPNFGQLTEAFKKAQQIQQDAQKLQEELDAMELEGKNQDGRVSICLSGNQLPLRIEIDPSILLEGKEKAEIAILEALKDAHELSTSTMKERMQELTGGLNLNLPGIDDGD.

It belongs to the YbaB/EbfC family. Homodimer.

The protein localises to the cytoplasm. Its subcellular location is the nucleoid. In terms of biological role, binds to DNA and alters its conformation. May be involved in regulation of gene expression, nucleoid organization and DNA protection. The polypeptide is Nucleoid-associated protein P9211_00201 (Prochlorococcus marinus (strain MIT 9211)).